A 157-amino-acid chain; its full sequence is S-ribosylhomocysteine lyase (157 aa).

The Fe cation site is built by His-54, His-58, and Cys-126.

This sequence belongs to the LuxS family. As to quaternary structure, homodimer. It depends on Fe cation as a cofactor.

It carries out the reaction S-(5-deoxy-D-ribos-5-yl)-L-homocysteine = (S)-4,5-dihydroxypentane-2,3-dione + L-homocysteine. In terms of biological role, involved in the synthesis of autoinducer 2 (AI-2) which is secreted by bacteria and is used to communicate both the cell density and the metabolic potential of the environment. The regulation of gene expression in response to changes in cell density is called quorum sensing. Catalyzes the transformation of S-ribosylhomocysteine (RHC) to homocysteine (HC) and 4,5-dihydroxy-2,3-pentadione (DPD). The polypeptide is S-ribosylhomocysteine lyase (Bacillus anthracis (strain A0248)).